We begin with the raw amino-acid sequence, 951 residues long: Glycine dehydrogenase (decarboxylating) 1 (951 aa).

At Lys703 the chain carries N6-(pyridoxal phosphate)lysine.

The protein belongs to the GcvP family. In terms of assembly, the glycine cleavage system is composed of four proteins: P, T, L and H. The cofactor is pyridoxal 5'-phosphate.

The enzyme catalyses N(6)-[(R)-lipoyl]-L-lysyl-[glycine-cleavage complex H protein] + glycine + H(+) = N(6)-[(R)-S(8)-aminomethyldihydrolipoyl]-L-lysyl-[glycine-cleavage complex H protein] + CO2. The glycine cleavage system catalyzes the degradation of glycine. The P protein binds the alpha-amino group of glycine through its pyridoxal phosphate cofactor; CO(2) is released and the remaining methylamine moiety is then transferred to the lipoamide cofactor of the H protein. The polypeptide is Glycine dehydrogenase (decarboxylating) 1 (Pseudomonas fluorescens (strain ATCC BAA-477 / NRRL B-23932 / Pf-5)).